Here is a 164-residue protein sequence, read N- to C-terminus: Phosphopantetheine adenylyltransferase (164 aa).

Residue serine 10 coordinates substrate. ATP contacts are provided by residues 10–11 and histidine 18; that span reads SF. Residues lysine 42, threonine 79, and arginine 93 each contribute to the substrate site. ATP-binding positions include 94 to 96, glutamate 104, and 129 to 135; these read GLR and VRPIAAT.

Belongs to the bacterial CoaD family. As to quaternary structure, homohexamer. It depends on Mg(2+) as a cofactor.

It localises to the cytoplasm. The enzyme catalyses (R)-4'-phosphopantetheine + ATP + H(+) = 3'-dephospho-CoA + diphosphate. The protein operates within cofactor biosynthesis; coenzyme A biosynthesis; CoA from (R)-pantothenate: step 4/5. Reversibly transfers an adenylyl group from ATP to 4'-phosphopantetheine, yielding dephospho-CoA (dPCoA) and pyrophosphate. The polypeptide is Phosphopantetheine adenylyltransferase (Bradyrhizobium sp. (strain BTAi1 / ATCC BAA-1182)).